The sequence spans 6486 residues: Tyrocidine synthase 3 (6486 aa).

A domain 1 (asparagine-activating) region spans residues 466–1038 (IFELIAEQAS…VAELARFLSR (573 aa)). 6 consecutive Carrier domains span residues 965 to 1040 (APQN…SRSE), 2002 to 2077 (APRN…AAAR), 3040 to 3115 (APTN…ATSG), 4075 to 4150 (AAQN…AESA), 5119 to 5194 (APRS…EETA), and 6162 to 6237 (APRN…THKR). 6 positions are modified to O-(pantetheine 4'-phosphoryl)serine: Ser-1000, Ser-2037, Ser-3075, Ser-4110, Ser-5154, and Ser-6197. Positions 1521–2070 (YEEYALTYRE…FESPTIAGLA (550 aa)) are domain 2 (glutamine-activating). The domain 3 (tyrosine-activating) stretch occupies residues 2536–3113 (NKTLQALFEE…IKALAQYVAT (578 aa)). The tract at residues 3590–4149 (EHAAVVMDGQ…HELAAHIAES (560 aa)) is domain 4 (valine-activating). The segment at 4606–5203 (YPTDKTFQKL…AKGNVFSIEP (598 aa)) is domain 5 (ornithine-activating). Residues 5658-6245 (LHQLFEEQVD…KRFESRYGTA (588 aa)) form a domain 6 (leucine-activating) region.

It belongs to the ATP-dependent AMP-binding enzyme family. In terms of assembly, large multienzyme complex of TycA, TycB and TycC. It depends on pantetheine 4'-phosphate as a cofactor.

The protein operates within antibiotic biosynthesis; tyrocidine biosynthesis. Its function is as follows. Incorporates six amino acids (for tyrocidine A, Asn, Gln, Tyr, Val, Orn, and Leu) in their L-configuration into the peptide product. This chain is Tyrocidine synthase 3 (tycC), found in Brevibacillus parabrevis.